The sequence spans 201 residues: Large ribosomal subunit protein eL15A (201 aa).

A disordered region spans residues 161 to 182 (SRGLTSIGKKSRGIGKGHRFNN). Residues 169–179 (KKSRGIGKGHR) show a composition bias toward basic residues.

It belongs to the eukaryotic ribosomal protein eL15 family. Component of the large ribosomal subunit (LSU). Mature yeast ribosomes consist of a small (40S) and a large (60S) subunit. The 40S small subunit contains 1 molecule of ribosomal RNA (18S rRNA) and at least 33 different proteins. The large 60S subunit contains 3 rRNA molecules (25S, 5.8S and 5S rRNA) and at least 46 different proteins.

The protein localises to the cytoplasm. It localises to the nucleus. Its subcellular location is the nucleolus. Functionally, component of the ribosome, a large ribonucleoprotein complex responsible for the synthesis of proteins in the cell. The small ribosomal subunit (SSU) binds messenger RNAs (mRNAs) and translates the encoded message by selecting cognate aminoacyl-transfer RNA (tRNA) molecules. The large subunit (LSU) contains the ribosomal catalytic site termed the peptidyl transferase center (PTC), which catalyzes the formation of peptide bonds, thereby polymerizing the amino acids delivered by tRNAs into a polypeptide chain. The nascent polypeptides leave the ribosome through a tunnel in the LSU and interact with protein factors that function in enzymatic processing, targeting, and the membrane insertion of nascent chains at the exit of the ribosomal tunnel. The sequence is that of Large ribosomal subunit protein eL15A (rpl15) from Schizosaccharomyces pombe (strain 972 / ATCC 24843) (Fission yeast).